A 105-amino-acid polypeptide reads, in one-letter code: Iron-sulfur cluster assembly protein CyaY (105 aa).

Belongs to the frataxin family.

Involved in iron-sulfur (Fe-S) cluster assembly. May act as a regulator of Fe-S biogenesis. The protein is Iron-sulfur cluster assembly protein CyaY of Paraburkholderia phytofirmans (strain DSM 17436 / LMG 22146 / PsJN) (Burkholderia phytofirmans).